A 142-amino-acid chain; its full sequence is Ribonuclease VapC44 (142 aa).

The PINc domain maps to 4-126; sequence LLDVNVLLAL…GRFVTFDQSI (123 aa). Residues aspartate 6 and aspartate 105 each coordinate Mg(2+).

The protein belongs to the PINc/VapC protein family. It depends on Mg(2+) as a cofactor.

Its function is as follows. Toxic component of a type II toxin-antitoxin (TA) system. An RNase. Its cognate antitoxin is VapB44. This Mycobacterium tuberculosis (strain CDC 1551 / Oshkosh) protein is Ribonuclease VapC44.